We begin with the raw amino-acid sequence, 226 residues long: Large ribosomal subunit protein uL3 (226 aa).

Glutamine 160 carries the N5-methylglutamine modification.

It belongs to the universal ribosomal protein uL3 family. Part of the 50S ribosomal subunit. Forms a cluster with proteins L14 and L19. In terms of processing, methylated by PrmB.

In terms of biological role, one of the primary rRNA binding proteins, it binds directly near the 3'-end of the 23S rRNA, where it nucleates assembly of the 50S subunit. In Leptothrix cholodnii (strain ATCC 51168 / LMG 8142 / SP-6) (Leptothrix discophora (strain SP-6)), this protein is Large ribosomal subunit protein uL3.